Reading from the N-terminus, the 553-residue chain is Pseudouridylate synthase RPUSD2 (553 aa).

Residues 76–135 are disordered; sequence AVGKQVPESGDQAQGGEGQLPSNGEQTPAPVADSGKRKKRRGATGERVVPPPKKRRTGVS. Asp-287 is an active-site residue. A Phosphothreonine modification is found at Thr-490.

This sequence belongs to the pseudouridine synthase RluA family.

The catalysed reaction is a uridine in mRNA = a pseudouridine in mRNA. Its function is as follows. Pseudouridine synthase that catalyzes pseudouridylation of mRNAs. This is Pseudouridylate synthase RPUSD2 from Mus musculus (Mouse).